A 390-amino-acid polypeptide reads, in one-letter code: MVNTSLLAALTAYAVAVAAAPTAPQVKGFSVNQVAVPKGVYRHPAAQLAKAYGKYHATVPTQVAAAAAATGSVTTNPTSNDEEYITQVTVGDDTLGLDFDTGSADLWVFSSQTPSSERSGHDYYTPGSSAQKIDGATWSISYGDGSSASGDVYKDKVTVGGVSYDSQAVESAEKVSSEFTQDTENDGLLGLAFSSINTVQPTPQKTFFDNVKSSLSEPIFAVALKHNAPGVYDFGYTDSSKYTGSITYTDVDNSQGFWSFTADGYSIGSDSSSDSITGIADTGTTLLLLDDSIVDAYYEQVNGASYDSSQGGYVFPSSASLPDFSVTIGDYTATVPGEYISFADVGNGQTFGGIQSNSGIGFSIFGDVFLKSQYVVFDASGPRLGFAAQA.

The N-terminal stretch at M1–A19 is a signal peptide. The propeptide at A20–A67 is activation peptide. Positions Y84–A387 constitute a Peptidase A1 domain. Residues D100 and D281 contribute to the active site.

It belongs to the peptidase A1 family. Monomer.

It is found in the secreted. The catalysed reaction is Hydrolysis of proteins with broad specificity. Generally favors hydrophobic residues in P1 and P1', but also accepts Lys in P1, which leads to activation of trypsinogen. Does not clot milk.. Inhibited by the microbial peptide pepstatin A. Secreted aspartic endopeptidase that allows assimilation of proteinaceous substrates. The scissile peptide bond is attacked by a nucleophilic water molecule activated by two aspartic residues in the active site. Shows a broad primary substrate specificity. Favors hydrophobic residues at the P1 and P1' positions, but also accepts a lysine residue in the P1 position, leading to the activation of trypsinogen and chymotrypsinogen A. Hydrolyzes myoglobin, hemoglobin and other natural proteins. Hydrolyzes equine myoglobin between positions 'Met-1' and 'Gly-2', 'Lys-43' and 'Phe-44', and 'Leu-70' and 'Thr-71'. This Aspergillus pseudoglaucus (Eurotium repens) protein is Aspergillopepsin-1 (pepA).